The following is a 657-amino-acid chain: Putative GreA-associated domains protein (657 aa).

One can recognise a GRAD2 domain in the interval 1–152 (MDTRDLTAYS…EQEGNKEKAT (152 aa)). The region spanning 153–657 (EFYKKALYRF…TAGSFGTLWE (505 aa)) is the GRAD1 domain.

The chain is Putative GreA-associated domains protein from Treponema pallidum (strain Nichols).